Here is a 152-residue protein sequence, read N- to C-terminus: Ribosome maturation factor RimP (152 aa).

It belongs to the RimP family.

The protein localises to the cytoplasm. In terms of biological role, required for maturation of 30S ribosomal subunits. The chain is Ribosome maturation factor RimP from Paraburkholderia phymatum (strain DSM 17167 / CIP 108236 / LMG 21445 / STM815) (Burkholderia phymatum).